Here is an 816-residue protein sequence, read N- to C-terminus: H(+)/Cl(-) exchange transporter 5 (816 aa).

Positions 1–28 are disordered; it reads MAMWQGAMDNRGFQQGSFNSFQSSSSDE. At 1-124 the chain is on the cytoplasmic side; sequence MAMWQGAMDN…WALIHSVSDA (124 aa). Residues 12–25 show a composition bias toward low complexity; it reads GFQQGSFNSFQSSS. 2 helical membrane-spanning segments follow: residues 125 to 162 and 208 to 231; these read FSGW…ICTE and VNYF…VKVF. The short motif at 237-241 is the Selectivity filter part_1 element; sequence GSGIP. Ser-238 provides a ligand contact to chloride. An intramembrane region (helical) is located at residues 240–247; that stretch reads IPEIKTIL. Helical transmembrane passes span 256 to 275 and 281 to 300; these read LGKW…VSSG and EGPL…HCFN. The Selectivity filter part_2 motif lies at 279–283; that stretch reads GKEGP. 2 intramembrane regions (helical) span residues 312–324 and 328–336; these read VLSA…VSVA and PIGGVLFSL. 5 helical membrane passes run 348 to 366, 389 to 414, 422 to 442, 498 to 518, and 523 to 542; these read LWRS…RSIN, LVPF…IAWC, LGKY…ILAF, MWQL…TFGM, and GLFI…LGVG. The short motif at 523–527 is the Selectivity filter part_3 element; that stretch reads GLFIP. Phe-525 provides a ligand contact to chloride. An intramembrane region (helical) is located at residues 570–584; that stretch reads GLYAMVGAAACLGGV. The segment at residues 585 to 587 is an intramembrane region (note=Loop between two helices); the sequence is TRM. Residues 588–599 constitute an intramembrane region (helical); sequence TVSLVVIMFELT. Residues 600-604 constitute an intramembrane region (note=Loop between two helices); that stretch reads GGLEY. The helical transmembrane segment at 605–622 threads the bilayer; sequence IVPLMAAAMTSKWVADAL. At 623-816 the chain is on the cytoplasmic side; the sequence is GREGIYDAHI…NQDPDSILFN (194 aa). Residue Tyr-628 participates in chloride binding. 2 CBS domains span residues 656-720 and 752-812; these read MKPR…ARKK and ILDL…DPDS. ATP is bound by residues Thr-666, 687–689, and 794–797; these read YSG and TKKD.

It belongs to the chloride channel (TC 2.A.49) family. ClC-5/CLCN5 subfamily. Interacts with NEDD4 and NEDD4L. In terms of processing, ubiquitinated by NEDD4L in the presence of albumin; which promotes endocytosis and proteasomal degradation.

The protein localises to the golgi apparatus membrane. It is found in the endosome membrane. The protein resides in the cell membrane. It carries out the reaction 2 chloride(in) + H(+)(out) = 2 chloride(out) + H(+)(in). Its function is as follows. Proton-coupled chloride transporter. Functions as antiport system and exchanges chloride ions against protons. Important for normal acidification of the endosome lumen. May play an important role in renal tubular function. The CLC channel family contains both chloride channels and proton-coupled anion transporters that exchange chloride or another anion for protons. The absence of conserved gating glutamate residues is typical for family members that function as channels. The sequence is that of H(+)/Cl(-) exchange transporter 5 (CLCN5) from Sus scrofa (Pig).